Consider the following 146-residue polypeptide: Putative pre-16S rRNA nuclease (146 aa).

This sequence belongs to the YqgF nuclease family.

The protein resides in the cytoplasm. Functionally, could be a nuclease involved in processing of the 5'-end of pre-16S rRNA. This is Putative pre-16S rRNA nuclease from Paraburkholderia phytofirmans (strain DSM 17436 / LMG 22146 / PsJN) (Burkholderia phytofirmans).